Consider the following 401-residue polypeptide: Acetate kinase (401 aa).

Asparagine 7 is a binding site for Mg(2+). Position 14 (lysine 14) interacts with ATP. Arginine 91 is a binding site for substrate. Residue aspartate 148 is the Proton donor/acceptor of the active site. Residues 208 to 212 (HLGNG), 283 to 285 (DFR), and 332 to 336 (GVGEN) contribute to the ATP site. Position 385 (glutamate 385) interacts with Mg(2+).

This sequence belongs to the acetokinase family. As to quaternary structure, homodimer. Requires Mg(2+) as cofactor. The cofactor is Mn(2+).

It is found in the cytoplasm. It catalyses the reaction acetate + ATP = acetyl phosphate + ADP. Its pathway is metabolic intermediate biosynthesis; acetyl-CoA biosynthesis; acetyl-CoA from acetate: step 1/2. Its function is as follows. Catalyzes the formation of acetyl phosphate from acetate and ATP. Can also catalyze the reverse reaction. The polypeptide is Acetate kinase (Thermoanaerobacter pseudethanolicus (strain ATCC 33223 / 39E) (Clostridium thermohydrosulfuricum)).